The sequence spans 131 residues: Large ribosomal subunit protein bL19c (131 aa).

It belongs to the bacterial ribosomal protein bL19 family.

The protein resides in the plastid. It localises to the cyanelle. Its function is as follows. This protein is located at the 30S-50S ribosomal subunit interface and may play a role in the structure and function of the aminoacyl-tRNA binding site. The chain is Large ribosomal subunit protein bL19c (rpl19) from Cyanophora paradoxa.